The following is a 198-amino-acid chain: Na(+)-translocating NADH-quinone reductase subunit E (198 aa).

6 helical membrane passes run 11-31 (AVFI…FLAV), 39-59 (FGLG…NNLV), 77-97 (FLNF…LEMI), 109-129 (LGIF…VSFM), 140-160 (IVYG…LASI), and 176-196 (LGVT…FSGV).

This sequence belongs to the NqrDE/RnfAE family. In terms of assembly, composed of six subunits; NqrA, NqrB, NqrC, NqrD, NqrE and NqrF.

Its subcellular location is the cell inner membrane. The enzyme catalyses a ubiquinone + n Na(+)(in) + NADH + H(+) = a ubiquinol + n Na(+)(out) + NAD(+). In terms of biological role, NQR complex catalyzes the reduction of ubiquinone-1 to ubiquinol by two successive reactions, coupled with the transport of Na(+) ions from the cytoplasm to the periplasm. NqrA to NqrE are probably involved in the second step, the conversion of ubisemiquinone to ubiquinol. This chain is Na(+)-translocating NADH-quinone reductase subunit E, found in Proteus mirabilis (strain HI4320).